The sequence spans 162 residues: UPF0305 protein MmarC7_1691 (162 aa).

The protein belongs to the UPF0305 family.

The sequence is that of UPF0305 protein MmarC7_1691 from Methanococcus maripaludis (strain C7 / ATCC BAA-1331).